The chain runs to 435 residues: Galactose/lactose metabolism regulatory protein GAL80 (435 aa).

M1 carries the N-acetylmethionine modification.

This sequence to K.lactis GAL80. As to quaternary structure, monomer.

This protein is a negative regulator for the gene expression of the lactose/galactose metabolic genes. It binds to GAL4 and so blocks transcriptional activation by it, in the absence of an inducing sugar. The polypeptide is Galactose/lactose metabolism regulatory protein GAL80 (GAL80) (Saccharomyces cerevisiae (strain ATCC 204508 / S288c) (Baker's yeast)).